We begin with the raw amino-acid sequence, 640 residues long: Chaperone protein DnaK (640 aa).

Threonine 199 is subject to Phosphothreonine; by autocatalysis. Low complexity predominate over residues 606-621 (QQAAGAGAQQADGTGK). The interval 606 to 640 (QQAAGAGAQQADGTGKAADDGVVDAEFEEVKEDNK) is disordered. The span at 626 to 640 (GVVDAEFEEVKEDNK) shows a compositional bias: acidic residues.

The protein belongs to the heat shock protein 70 family.

In terms of biological role, acts as a chaperone. The sequence is that of Chaperone protein DnaK from Cellvibrio japonicus (strain Ueda107) (Pseudomonas fluorescens subsp. cellulosa).